Consider the following 513-residue polypeptide: Protein indeterminate-domain 11 (513 aa).

Residues Met-1–Glu-84 are disordered. Residues Gln-10–Asn-45 are compositionally biased toward polar residues. Residues Gln-51 to Gln-60 show a composition bias toward low complexity. A Phosphoserine modification is found at Ser-89. C2H2-type zinc fingers lie at residues Phe-99–His-121 and Tyr-141–His-171. Positions Ile-163 to Lys-170 match the Nuclear localization signal motif. The C2H2-type 2; degenerate zinc-finger motif lies at Trp-176–Gly-199. Positions 178, 181, 194, 198, 205, 207, 220, and 224 each coordinate Zn(2+). Residues Tyr-203–Ala-226 form a CCHC-type 2; atypical zinc finger. Residues Arg-213 to Glu-225 form an SHR-binding region. Disordered stretches follow at residues Ala-255–His-280 and Pro-334–Ser-358. Low complexity predominate over residues Thr-264–His-280.

It localises to the nucleus. In terms of biological role, probable transcription factor. This Arabidopsis thaliana (Mouse-ear cress) protein is Protein indeterminate-domain 11.